The primary structure comprises 583 residues: Sphingomyelin phosphodiesterase A (583 aa).

A signal peptide spans 1-21 (MKSIPIILLVLIGLLLASVYS). The region spanning 51–133 (IQLSCDVCQI…GYFKICSATG (83 aa)) is the Saposin B-type domain. Cystine bridges form between Cys55/Cys129, Cys58/Cys123, and Cys86/Cys97. Asn72 carries an N-linked (GlcNAc...) asparagine glycan. An N-linked (GlcNAc...) asparagine glycan is attached at Asn182. Zn(2+) is bound by residues Asp193 and His195. Cys214 and Cys229 are disulfide-bonded. Zn(2+) contacts are provided by Asp258 and Asn298. Asn377 carries N-linked (GlcNAc...) asparagine glycosylation. Zn(2+) contacts are provided by His401, His436, and His438. 4 N-linked (GlcNAc...) asparagine glycosylation sites follow: Asn495, Asn500, Asn537, and Asn547. The cysteines at positions 567 and 580 are disulfide-linked.

It belongs to the acid sphingomyelinase family. It depends on Zn(2+) as a cofactor.

It is found in the secreted. In terms of biological role, converts sphingomyelin to ceramide. The chain is Sphingomyelin phosphodiesterase A (sgmA) from Dictyostelium discoideum (Social amoeba).